A 270-amino-acid polypeptide reads, in one-letter code: Glucosamine-6-phosphate deaminase (270 aa).

Catalysis depends on aspartate 72, which acts as the Proton acceptor; for enolization step. Residue aspartate 141 is the For ring-opening step of the active site. Histidine 143 serves as the catalytic Proton acceptor; for ring-opening step. The active-site For ring-opening step is glutamate 148.

Belongs to the glucosamine/galactosamine-6-phosphate isomerase family. NagB subfamily.

The catalysed reaction is alpha-D-glucosamine 6-phosphate + H2O = beta-D-fructose 6-phosphate + NH4(+). It participates in amino-sugar metabolism; N-acetylneuraminate degradation; D-fructose 6-phosphate from N-acetylneuraminate: step 5/5. Its activity is regulated as follows. Allosterically activated by N-acetylglucosamine 6-phosphate (GlcNAc6P). Its function is as follows. Catalyzes the reversible isomerization-deamination of glucosamine 6-phosphate (GlcN6P) to form fructose 6-phosphate (Fru6P) and ammonium ion. The polypeptide is Glucosamine-6-phosphate deaminase (Treponema denticola (strain ATCC 35405 / DSM 14222 / CIP 103919 / JCM 8153 / KCTC 15104)).